We begin with the raw amino-acid sequence, 353 residues long: uncharacterized protein (353 aa).

A helical membrane pass occupies residues Gly267–Cys287.

This sequence belongs to the glycosyltransferase group 1 family. Glycosyltransferase 4 subfamily.

The protein localises to the membrane. This is an uncharacterized protein from Haemophilus influenzae (strain ATCC 51907 / DSM 11121 / KW20 / Rd).